The primary structure comprises 347 residues: Galactoside alpha-(1,2)-fucosyltransferase 2 (347 aa).

Over Met1–Gln5 the chain is Cytoplasmic. A helical; Signal-anchor for type II membrane protein transmembrane segment spans residues Val6 to Ile26. Residues His27–His347 are Lumenal-facing. N-linked (GlcNAc...) asparagine glycosylation is found at Asn192, Asn258, Asn286, and Asn312.

It belongs to the glycosyltransferase 11 family. In terms of tissue distribution, expressed in stomach, colon, ovary and uterus, specifically in luminal uterine epithelium. Expressed in various tissues including heart, liver, kidney, testis, epididymis, small intestine,and cecum. Expressed in duodenum, jejunum and ileum.

The protein resides in the golgi apparatus. It is found in the golgi stack membrane. It catalyses the reaction a beta-D-galactosyl-(1-&gt;3)-N-acetyl-beta-D-glucosaminyl derivative + GDP-beta-L-fucose = an alpha-L-Fuc-(1-&gt;2)-beta-D-Gal-(1-&gt;3)-beta-D-GlcNAc derivative + GDP + H(+). It carries out the reaction a beta-D-galactosyl-(1-&gt;4)-N-acetyl-beta-D-glucosaminyl derivative + GDP-beta-L-fucose = an alpha-L-Fuc-(1-&gt;2)-beta-D-Gal-(1-&gt;4)-beta-D-GlcNAc derivative + GDP + H(+). The catalysed reaction is a neolactoside nLc4Cer + GDP-beta-L-fucose = a neolactoside IV(2)-alpha-Fuc-nLc4Cer + GDP + H(+). The enzyme catalyses a neolactoside nLc4Cer(d18:1(4E)) + GDP-beta-L-fucose = a neolactoside IV(2)-alpha-Fuc-nLc4Cer(d18:1(4E)) + GDP + H(+). It catalyses the reaction a ganglioside GM1 + GDP-beta-L-fucose = a ganglioside Fuc-GM1 + GDP + H(+). It carries out the reaction a ganglioside GA1 + GDP-beta-L-fucose = a ganglioside Fuc-GA1 + GDP + H(+). The catalysed reaction is Lc4Cer + GDP-beta-L-fucose = alpha-L-fucosyl-(1-&gt;2)-beta-D-galactosyl-(1-&gt;3)-N-acetyl-beta-D-glucosaminyl-(1-&gt;3)-beta-D-galactosyl-(1-&gt;4)-beta-D-glucosyl-(1&lt;-&gt;1')-ceramide + GDP + H(+). The enzyme catalyses a beta-D-Gal-(1-&gt;3)-beta-D-GlcNAc-(1-&gt;3)-beta-D-Gal-(1-&gt;4)-beta-D-Glc-(1&lt;-&gt;1')-Cer(d18:1(4E)) + GDP-beta-L-fucose = alpha-L-fucosyl-(1-&gt;2)- beta-D-galactosyl-(1-&gt;3)-N-acetyl-beta-D-glucosaminyl-(1-&gt;3)-beta-D-galactosyl-(1-&gt;4)-beta-D-glucosyl-(1&lt;-&gt;1')-N-acylsphing-4-enine + GDP + H(+). It catalyses the reaction a ganglioside GD1b + GDP-beta-L-fucose = a ganglioside Fuc-GD1b + GDP + H(+). It carries out the reaction a ganglioside GM1 (d18:1(4E)) + GDP-beta-L-fucose = a ganglioside Fuc-GM1 (d18:1(4E)) + GDP + H(+). The catalysed reaction is a globoside GalGb4Cer (d18:1(4E)) + GDP-beta-L-fucose = a globoside Globo-H (d18:1(4E)) + GDP + H(+). The enzyme catalyses a lactoside III(4)-a-Fuc-Lc4Cer + GDP-beta-L-fucose = a lactoside IV(2),III(4)-a-[Fuc]2-Lc4Cer + GDP + H(+). It catalyses the reaction beta-D-galactosyl-(1-&gt;3)-N-acetyl-D-galactosamine + GDP-beta-L-fucose = alpha-L-fucosyl-(1-&gt;2)-beta-D-galactosyl-(1-&gt;3)-N-acetyl-D-galactosamine + GDP + H(+). The protein operates within protein modification; protein glycosylation. In terms of biological role, catalyzes the transfer of L-fucose, from a guanosine diphosphate-beta-L-fucose, to the terminal galactose on both O- and N-linked glycans chains of cell surface glycoproteins and glycolipids and the resulting epitope regulates several processes such as cell-cell interaction including host-microbe interaction, cell surface expression and cell proliferation. Preferentially fucosylates gangliosides GA1 and GM1 in the antrum, cecum and colon and in the female reproductive organs. Fucosylated host glycoproteins or glycolipids mediate interaction with intestinal microbiota influencing its composition. Creates a soluble precursor oligosaccharide FuC-alpha ((1,2)Galbeta-) called the H antigen which is an essential substrate for the final step in the soluble ABO blood group antigen synthesis pathway. The polypeptide is Galactoside alpha-(1,2)-fucosyltransferase 2 (Mus musculus (Mouse)).